We begin with the raw amino-acid sequence, 287 residues long: S-methyl-5'-thioadenosine phosphorylase (287 aa).

Residues threonine 13 and 55-56 (RH) each bind phosphate. Methionine 186 lines the substrate pocket. Phosphate is bound at residue threonine 187. 210 to 212 (DYD) serves as a coordination point for substrate.

Belongs to the PNP/MTAP phosphorylase family. MTAP subfamily. As to quaternary structure, homohexamer. Dimer of a homotrimer.

The enzyme catalyses S-methyl-5'-thioadenosine + phosphate = 5-(methylsulfanyl)-alpha-D-ribose 1-phosphate + adenine. It participates in amino-acid biosynthesis; L-methionine biosynthesis via salvage pathway; S-methyl-5-thio-alpha-D-ribose 1-phosphate from S-methyl-5'-thioadenosine (phosphorylase route): step 1/1. Its function is as follows. Catalyzes the reversible phosphorylation of S-methyl-5'-thioadenosine (MTA) to adenine and 5-methylthioribose-1-phosphate. Involved in the breakdown of MTA, a major by-product of polyamine biosynthesis. Responsible for the first step in the methionine salvage pathway after MTA has been generated from S-adenosylmethionine. Has broad substrate specificity with 6-aminopurine nucleosides as preferred substrates. The sequence is that of S-methyl-5'-thioadenosine phosphorylase from Leptospira interrogans serogroup Icterohaemorrhagiae serovar copenhageni (strain Fiocruz L1-130).